Reading from the N-terminus, the 128-residue chain is Small ribosomal subunit protein eS8 (128 aa).

Belongs to the eukaryotic ribosomal protein eS8 family. In terms of assembly, part of the 30S ribosomal subunit.

This Methanococcus maripaludis (strain DSM 14266 / JCM 13030 / NBRC 101832 / S2 / LL) protein is Small ribosomal subunit protein eS8.